Here is a 957-residue protein sequence, read N- to C-terminus: Glycine dehydrogenase (decarboxylating) (957 aa).

An N6-(pyridoxal phosphate)lysine modification is found at Lys-708.

It belongs to the GcvP family. As to quaternary structure, the glycine cleavage system is composed of four proteins: P, T, L and H. The cofactor is pyridoxal 5'-phosphate.

It carries out the reaction N(6)-[(R)-lipoyl]-L-lysyl-[glycine-cleavage complex H protein] + glycine + H(+) = N(6)-[(R)-S(8)-aminomethyldihydrolipoyl]-L-lysyl-[glycine-cleavage complex H protein] + CO2. Functionally, the glycine cleavage system catalyzes the degradation of glycine. The P protein binds the alpha-amino group of glycine through its pyridoxal phosphate cofactor; CO(2) is released and the remaining methylamine moiety is then transferred to the lipoamide cofactor of the H protein. This chain is Glycine dehydrogenase (decarboxylating), found in Escherichia fergusonii (strain ATCC 35469 / DSM 13698 / CCUG 18766 / IAM 14443 / JCM 21226 / LMG 7866 / NBRC 102419 / NCTC 12128 / CDC 0568-73).